The primary structure comprises 262 residues: Shikimate dehydrogenase (NADP(+)) (262 aa).

Shikimate is bound by residues 14–16 and Thr-60; that span reads SAS. The Proton acceptor role is filled by Lys-64. Residues Asn-85 and Asp-100 each contribute to the shikimate site. NADP(+)-binding positions include 121–125, 145–150, and Phe-203; these read GAGGA and NRTAER. Tyr-205 is a shikimate binding site. Residue Gly-227 coordinates NADP(+).

It belongs to the shikimate dehydrogenase family. Homodimer.

It catalyses the reaction shikimate + NADP(+) = 3-dehydroshikimate + NADPH + H(+). The protein operates within metabolic intermediate biosynthesis; chorismate biosynthesis; chorismate from D-erythrose 4-phosphate and phosphoenolpyruvate: step 4/7. Involved in the biosynthesis of the chorismate, which leads to the biosynthesis of aromatic amino acids. Catalyzes the reversible NADPH linked reduction of 3-dehydroshikimate (DHSA) to yield shikimate (SA). In Pyrobaculum aerophilum (strain ATCC 51768 / DSM 7523 / JCM 9630 / CIP 104966 / NBRC 100827 / IM2), this protein is Shikimate dehydrogenase (NADP(+)).